A 485-amino-acid chain; its full sequence is Ribulose bisphosphate carboxylase large chain (485 aa).

Residues N124 and T174 each contribute to the substrate site. K176 serves as the catalytic Proton acceptor. Residue K178 coordinates substrate. Mg(2+) is bound by residues K202, D204, and E205. K202 carries the N6-carboxylysine modification. H294 serves as the catalytic Proton acceptor. Substrate contacts are provided by R295, H327, and S379.

Belongs to the RuBisCO large chain family. Type I subfamily. In terms of assembly, heterohexadecamer of 8 large chains and 8 small chains. The cofactor is Mg(2+).

The catalysed reaction is 2 (2R)-3-phosphoglycerate + 2 H(+) = D-ribulose 1,5-bisphosphate + CO2 + H2O. The enzyme catalyses D-ribulose 1,5-bisphosphate + O2 = 2-phosphoglycolate + (2R)-3-phosphoglycerate + 2 H(+). Its function is as follows. RuBisCO catalyzes two reactions: the carboxylation of D-ribulose 1,5-bisphosphate, the primary event in carbon dioxide fixation, as well as the oxidative fragmentation of the pentose substrate in the photorespiration process. Both reactions occur simultaneously and in competition at the same active site. The chain is Ribulose bisphosphate carboxylase large chain from Rhodopseudomonas palustris (strain BisB18).